The chain runs to 98 residues: MNQSAVLIFCLIFLTLNGTQGIPLSRTIRCTCIKISDQPVNLRSLEKIEMIPASPSCPHVEIIATMKKSGEKRCLNPESKTIKSLVKAISKKRSRRSP.

A signal peptide spans 1-21 (MNQSAVLIFCLIFLTLNGTQG). Arginine 26 carries the citrulline modification. Cystine bridges form between cysteine 30–cysteine 57 and cysteine 32–cysteine 74.

The protein belongs to the intercrine alpha (chemokine CxC) family. In terms of assembly, monomer, dimer, and tetramer. Interacts with CXCR3 (via N-terminus).

The protein localises to the secreted. In terms of biological role, pro-inflammatory cytokine that is involved in a wide variety of processes such as chemotaxis, differentiation, and activation of peripheral immune cells, regulation of cell growth, apoptosis and modulation of angiostatic effects. Plays thereby an important role during viral infections by stimulating the activation and migration of immune cells to the infected sites. Mechanistically, binding of CXCL10 to the CXCR3 receptor activates G protein-mediated signaling and results in downstream activation of phospholipase C-dependent pathway, an increase in intracellular calcium production and actin reorganization. In turn, recruitment of activated Th1 lymphocytes occurs at sites of inflammation. Activation of the CXCL10/CXCR3 axis also plays an important role in neurons in response to brain injury for activating microglia, the resident macrophage population of the central nervous system, and directing them to the lesion site. This recruitment is an essential element for neuronal reorganization. In Canis lupus familiaris (Dog), this protein is C-X-C motif chemokine 10 (CXCL10).